The primary structure comprises 327 residues: MHSKSRITAIGTYVPDQILSNNDLEKMVHTNDEWIVQRTGMRERRIASEEEYSSNLAIKAIENLCTTYKKNLEDVDCIIVATTTADYVFPSVACQIQQYFNIPHTLAFDLNATCAGFTYGLHVGNSLITSESHEKVLVVATETLSKVTDYTDRTTCILFGDGAGAILLERDENTPSFIAAHMGTNGDGGIHLYRTNLSTTMNGTPLQTNEKIVQNGREVYKWATRTVPKGIKNLLHTVNMQVDDIDWFIPHSANLRMIESICEKSQIPIQKTLTSVEYMGNTSSVTIPLALNLAIKEGKLNNGDTLLLYGFGGGLTHLGLIVEWNLI.

Catalysis depends on residues Cys114 and His251. Residues 252–256 (SANLR) form an ACP-binding region. Asn281 is an active-site residue.

This sequence belongs to the thiolase-like superfamily. FabH family. Homodimer.

Its subcellular location is the cytoplasm. It carries out the reaction malonyl-[ACP] + acetyl-CoA + H(+) = 3-oxobutanoyl-[ACP] + CO2 + CoA. It functions in the pathway lipid metabolism; fatty acid biosynthesis. Its function is as follows. Catalyzes the condensation reaction of fatty acid synthesis by the addition to an acyl acceptor of two carbons from malonyl-ACP. Catalyzes the first condensation reaction which initiates fatty acid synthesis and may therefore play a role in governing the total rate of fatty acid production. Possesses both acetoacetyl-ACP synthase and acetyl transacylase activities. Its substrate specificity determines the biosynthesis of branched-chain and/or straight-chain of fatty acids. This chain is Beta-ketoacyl-[acyl-carrier-protein] synthase III 2, found in Bacillus cereus (strain ATCC 14579 / DSM 31 / CCUG 7414 / JCM 2152 / NBRC 15305 / NCIMB 9373 / NCTC 2599 / NRRL B-3711).